The primary structure comprises 461 residues: Photosystem II CP43 reaction center protein (461 aa).

A propeptide spanning residues 1-2 is cleaved from the precursor; the sequence is ME. Residue Thr3 is modified to N-acetylthreonine. Phosphothreonine is present on Thr3. Helical transmembrane passes span 57-81, 122-143, 166-188, 243-263, and 279-300; these read LFEVAHFVPEKPMYEQGLILLPHLA, LLGPETLEESFPFFGYVWKDRN, KALYFGGVYDTWAPGGGDVRKIT, KPFAWARRALVWSGEAYLSYS, and WFNNTAYPSEFYGPTGPEASQA. [CaMn4O5] cluster is bound at residue Glu355. A helical membrane pass occupies residues 435-459; the sequence is RARAAAAGFEKGIDRDLEPVLFMTP.

The protein belongs to the PsbB/PsbC family. PsbC subfamily. PSII is composed of 1 copy each of membrane proteins PsbA, PsbB, PsbC, PsbD, PsbE, PsbF, PsbH, PsbI, PsbJ, PsbK, PsbL, PsbM, PsbT, PsbX, PsbY, PsbZ, Psb30/Ycf12, at least 3 peripheral proteins of the oxygen-evolving complex and a large number of cofactors. It forms dimeric complexes. Binds multiple chlorophylls and provides some of the ligands for the Ca-4Mn-5O cluster of the oxygen-evolving complex. It may also provide a ligand for a Cl- that is required for oxygen evolution. PSII binds additional chlorophylls, carotenoids and specific lipids. is required as a cofactor.

The protein localises to the plastid. The protein resides in the chloroplast thylakoid membrane. Its function is as follows. One of the components of the core complex of photosystem II (PSII). It binds chlorophyll and helps catalyze the primary light-induced photochemical processes of PSII. PSII is a light-driven water:plastoquinone oxidoreductase, using light energy to abstract electrons from H(2)O, generating O(2) and a proton gradient subsequently used for ATP formation. In Nandina domestica (Heavenly bamboo), this protein is Photosystem II CP43 reaction center protein.